The chain runs to 267 residues: Undecaprenyl-diphosphatase (267 aa).

A run of 8 helical transmembrane segments spans residues 1–21 (MSYF…FLPI), 39–59 (QGLA…VIYF), 83–103 (AKLA…GLVM), 111–131 (LRSA…LWWV), 144–164 (AGWK…IPGT), 189–209 (FLMS…KLVT), 218–238 (FLLT…HLFL), and 246–266 (MTPF…YLLM).

The protein belongs to the UppP family.

The protein localises to the cell inner membrane. The catalysed reaction is di-trans,octa-cis-undecaprenyl diphosphate + H2O = di-trans,octa-cis-undecaprenyl phosphate + phosphate + H(+). In terms of biological role, catalyzes the dephosphorylation of undecaprenyl diphosphate (UPP). Confers resistance to bacitracin. This chain is Undecaprenyl-diphosphatase, found in Vibrio vulnificus (strain CMCP6).